The primary structure comprises 379 residues: MTAEHFPVTELAKDLISRPSVTPLDEGCQTLMAERLSAIGFNIEPMIFEDTTNMWARRGNQGPVFCFAGHTDVVPTGDISRWHTPPFEPTIIDGYLYGRGAADMKGSLAAMIVATERFVTKHPDHQGSIAFLITSDEEGPFINGTTRVIDTLEARNEKITWALVGEPSSTLKLGDVVKNGRRGSLTGNLTIKGIQGHVAYPHLADNPIHKAAPFLAELSQMHWDNGNEFFPPTSMQIANIHGGTGASNVIPGALEVMFNFRYSTEVTAEILIERVEALLKAHELDYDISWIFNGLPFLTGEGPLLDATRYAIHQVTGYDTSPQTTGGTSDGRFIAPTGAKVLELGPVNATIHKVNECVKVDDLEQLALCYEVILEQLLC.

His70 is a Zn(2+) binding site. Asp72 is an active-site residue. Asp103 serves as a coordination point for Zn(2+). Glu137 functions as the Proton acceptor in the catalytic mechanism. Zn(2+) contacts are provided by Glu138, Glu166, and His352.

The protein belongs to the peptidase M20A family. DapE subfamily. Homodimer. Zn(2+) serves as cofactor. It depends on Co(2+) as a cofactor.

The enzyme catalyses N-succinyl-(2S,6S)-2,6-diaminopimelate + H2O = (2S,6S)-2,6-diaminopimelate + succinate. The protein operates within amino-acid biosynthesis; L-lysine biosynthesis via DAP pathway; LL-2,6-diaminopimelate from (S)-tetrahydrodipicolinate (succinylase route): step 3/3. Functionally, catalyzes the hydrolysis of N-succinyl-L,L-diaminopimelic acid (SDAP), forming succinate and LL-2,6-diaminopimelate (DAP), an intermediate involved in the bacterial biosynthesis of lysine and meso-diaminopimelic acid, an essential component of bacterial cell walls. The protein is Succinyl-diaminopimelate desuccinylase of Shewanella putrefaciens (strain CN-32 / ATCC BAA-453).